Here is a 60-residue protein sequence, read N- to C-terminus: Large ribosomal subunit protein bL33 (60 aa).

This sequence belongs to the bacterial ribosomal protein bL33 family.

This Flavobacterium psychrophilum (strain ATCC 49511 / DSM 21280 / CIP 103535 / JIP02/86) protein is Large ribosomal subunit protein bL33.